An 89-amino-acid chain; its full sequence is Large ribosomal subunit protein bL31B (89 aa).

Belongs to the bacterial ribosomal protein bL31 family. Type B subfamily. Part of the 50S ribosomal subunit.

This Pseudomonas fluorescens (strain ATCC BAA-477 / NRRL B-23932 / Pf-5) protein is Large ribosomal subunit protein bL31B.